We begin with the raw amino-acid sequence, 131 residues long: Small ribosomal subunit protein uS8 (131 aa).

The protein belongs to the universal ribosomal protein uS8 family. In terms of assembly, part of the 30S ribosomal subunit. Contacts proteins S5 and S12.

One of the primary rRNA binding proteins, it binds directly to 16S rRNA central domain where it helps coordinate assembly of the platform of the 30S subunit. This chain is Small ribosomal subunit protein uS8, found in Alkalilimnicola ehrlichii (strain ATCC BAA-1101 / DSM 17681 / MLHE-1).